The sequence spans 124 residues: Small ribosomal subunit protein uS12 (124 aa).

Asp-89 carries the post-translational modification 3-methylthioaspartic acid.

The protein belongs to the universal ribosomal protein uS12 family. Part of the 30S ribosomal subunit. Contacts proteins S8 and S17. May interact with IF1 in the 30S initiation complex.

Its function is as follows. With S4 and S5 plays an important role in translational accuracy. Functionally, interacts with and stabilizes bases of the 16S rRNA that are involved in tRNA selection in the A site and with the mRNA backbone. Located at the interface of the 30S and 50S subunits, it traverses the body of the 30S subunit contacting proteins on the other side and probably holding the rRNA structure together. The combined cluster of proteins S8, S12 and S17 appears to hold together the shoulder and platform of the 30S subunit. The chain is Small ribosomal subunit protein uS12 from Hamiltonella defensa subsp. Acyrthosiphon pisum (strain 5AT).